A 331-amino-acid polypeptide reads, in one-letter code: Phosphate acyltransferase (331 aa).

This sequence belongs to the PlsX family. As to quaternary structure, homodimer. Probably interacts with PlsY.

It is found in the cytoplasm. It carries out the reaction a fatty acyl-[ACP] + phosphate = an acyl phosphate + holo-[ACP]. It functions in the pathway lipid metabolism; phospholipid metabolism. Its function is as follows. Catalyzes the reversible formation of acyl-phosphate (acyl-PO(4)) from acyl-[acyl-carrier-protein] (acyl-ACP). This enzyme utilizes acyl-ACP as fatty acyl donor, but not acyl-CoA. The chain is Phosphate acyltransferase from Exiguobacterium sibiricum (strain DSM 17290 / CCUG 55495 / CIP 109462 / JCM 13490 / 255-15).